The sequence spans 226 residues: Lipoprotein-releasing system ATP-binding protein LolD 1 (226 aa).

The 221-residue stretch at 6-226 (LRLDKVTRSF…TLREGKVVAA (221 aa)) folds into the ABC transporter domain. Residue 42–49 (GPSGAGKS) coordinates ATP.

It belongs to the ABC transporter superfamily. Lipoprotein translocase (TC 3.A.1.125) family. In terms of assembly, the complex is composed of two ATP-binding proteins (LolD) and two transmembrane proteins (LolC and LolE).

It localises to the cell inner membrane. Its function is as follows. Part of the ABC transporter complex LolCDE involved in the translocation of mature outer membrane-directed lipoproteins, from the inner membrane to the periplasmic chaperone, LolA. Responsible for the formation of the LolA-lipoprotein complex in an ATP-dependent manner. The protein is Lipoprotein-releasing system ATP-binding protein LolD 1 of Rhodospirillum rubrum (strain ATCC 11170 / ATH 1.1.1 / DSM 467 / LMG 4362 / NCIMB 8255 / S1).